We begin with the raw amino-acid sequence, 314 residues long: MIFIYIFLFLSSAIIDSNGFAMAQKLEAKGGKGGKEWDDGAGHDNVAKVYIRGGLEGIQYIKFDYVKDGQSVEGSIHGVSGSGFTQMFEIDYQNGEHIVSVDGYFDKSGVMQALEFKTNRKTSEVIGYPKSNTKFSLGGVNGKMINGFHGSAGKALNSIGAYLTKVPPTKSELVGGWGGDYWDDGPNYDGVRKVYVTYMNTCIRSINIDYEKDGQVVTSSHGNKEGETEEFAIDYPNEFLISVEGTYDSILFPDHYVLVITSLSFKTSKGRISPTYGVVSGTKFVLESQGNAIVGFYGRNGGAFDAIGVYFSPI.

Residues methionine 1–alanine 23 form the signal peptide. Jacalin-type lectin domains follow at residues glutamine 24–lysine 165 and proline 168–proline 313.

Belongs to the jacalin lectin family.

The protein is Jacalin-related lectin 9 (JAL9) of Arabidopsis thaliana (Mouse-ear cress).